The following is a 1602-amino-acid chain: MAP kinase-activating death domain protein (1602 aa).

Residues 13–267 (YLVIVGARHP…VPVSGQKRVD (255 aa)) form the uDENN domain. The segment covering 105–121 (PKEKAEGGAGPRGKEGA) has biased composition (basic and acidic residues). The disordered stretch occupies residues 105–167 (PKEKAEGGAG…GKRRAKAGNR (63 aa)). A compositionally biased stretch (low complexity) spans 126–137 (ASEEAATESSES). A compositionally biased stretch (polar residues) spans 138–156 (GSTLQPPSADSTPDVNQSP). At S155 the chain carries Phosphoserine. The span at 157 to 166 (RGKRRAKAGN) shows a compositional bias: basic residues. The 141-residue stretch at 288-428 (RFTLVDFPLH…ESLELKKHLK (141 aa)) folds into the cDENN domain. Residues 430–564 (ALASMSLNTQ…LNPSNYAFQR (135 aa)) form the dDENN domain. Disordered stretches follow at residues 603 to 635 (ALSV…SSYS) and 676 to 840 (QPQK…NSTE). Acidic residues predominate over residues 614–629 (SDPTDDSGSDSMDYDD). 2 positions are modified to phosphoserine: S688 and S691. The span at 688 to 698 (SENSQENLPLR) shows a compositional bias: polar residues. The segment covering 699 to 711 (SSSSTTASSSPST) has biased composition (low complexity). Residue S778 is modified to Phosphoserine. Residues 789 to 803 (ESYTPRFSQHASGSR) are compositionally biased toward polar residues. Phosphoserine is present on residues S812, S817, and S819. Over residues 826 to 839 (RASSPNSTVSNNST) the composition is skewed to low complexity. A phosphoserine mark is found at S857, S861, S895, S900, and S909. Disordered stretches follow at residues 870–920 (KGAR…SSEN), 1030–1089 (KEPD…DTRS), and 1113–1231 (TEEK…RSSE). Polar residues predominate over residues 911–920 (QGRSSNSSEN). A Phosphoserine modification is found at S1038. T1040 and T1045 each carry phosphothreonine. A Phosphoserine modification is found at S1089. The segment covering 1119–1134 (QISADSGVSLASASQR) has biased composition (polar residues). Residues 1151-1162 (SSSQDSEVSNSS) are compositionally biased toward low complexity. The span at 1191 to 1209 (SRATLSDSEIETNSATSTI) shows a compositional bias: polar residues. Phosphothreonine is present on T1194. Phosphoserine occurs at positions 1196 and 1225. Positions 1295 to 1370 (GMDQGPQEMI…GLVYSQQINE (76 aa)) constitute a Death domain.

It belongs to the MADD family. In terms of assembly, interacts (via death domain) with TNFRSF1A (via death domain). Interacts with PIDD1. Interacts with YWHAZ. Interacts (via death domain) with KIF1B; links the motor KIF1B to Rab3-carrying vesicles in anterograde synaptic vesicle transport. Interacts with KIF1A. Interacts (via uDENN domain) with RAB3A, RAB3B, RAB3C and RAB3D; the GTP-bound form of the Rab proteins is preferred for interaction. In terms of tissue distribution, expressed in all tissues examined with the highest expression in brain.

The protein localises to the cell membrane. Its subcellular location is the cytoplasm. It localises to the cell projection. It is found in the axon. Functionally, guanyl-nucleotide exchange factor that regulates small GTPases of the Rab family. Converts GDP-bound inactive form of RAB27A and RAB27B to the GTP-bound active forms. Converts GDP-bound inactive form of RAB3A, RAB3C and RAB3D to the GTP-bound active forms, GTPases involved in synaptic vesicle exocytosis and vesicle secretion. Plays a role in synaptic vesicle formation and in vesicle trafficking at the neuromuscular junction. Involved in up-regulating a post-docking step of synaptic exocytosis in central synapses. Probably by binding to the motor proteins KIF1B and KIF1A, mediates motor-dependent transport of GTP-RAB3A-positive vesicles to the presynaptic nerve terminals. Plays a role in TNFA-mediated activation of the MAPK pathway, including ERK1/2. May link TNFRSF1A with MAP kinase activation. May be involved in the regulation of TNFA-induced apoptosis. The protein is MAP kinase-activating death domain protein of Rattus norvegicus (Rat).